An 89-amino-acid polypeptide reads, in one-letter code: uncharacterized protein (89 aa).

A run of 3 helical transmembrane segments spans residues 9–29 (ICNFLFQFSLEFFSISSLHSI), 35–55 (ISLSLSLFFLVAILYNIYIYL), and 65–85 (ILFAIPPLCPLCSPCFFFGTS).

It localises to the membrane. This is an uncharacterized protein from Schizosaccharomyces pombe (strain 972 / ATCC 24843) (Fission yeast).